The sequence spans 255 residues: Homeobox protein Hox-D4 (255 aa).

The disordered stretch occupies residues 31–128; sequence EQGADYYGGG…KQPPPGTALK (98 aa). Pro residues predominate over residues 94–109; the sequence is EPCPAPPAPPPAPLPG. The Antp-type hexapeptide signature appears at 133-138; sequence VYPWMK. The segment at residues 154–213 is a DNA-binding region (homeobox); that stretch reads PKRSRTAYTRQQVLELEKEFHFNRYLTRRRRIEIAHTLCLSERQIKIWFQNRRMKWKKDH. Residues 212–255 form a disordered region; the sequence is DHKLPNTKGRSSSSSSSSSCSSSVAPSQHLQPMAKDHHTDLTTL. A compositionally biased stretch (low complexity) spans 222–234; that stretch reads SSSSSSSSSCSSS. Over residues 245-255 the composition is skewed to basic and acidic residues; the sequence is AKDHHTDLTTL.

The protein belongs to the Antp homeobox family. Deformed subfamily. As to quaternary structure, forms a DNA-binding heterodimer with transcription factor PBX1.

Its subcellular location is the nucleus. Sequence-specific transcription factor which is part of a developmental regulatory system that provides cells with specific positional identities on the anterior-posterior axis. The protein is Homeobox protein Hox-D4 (HOXD4) of Gorilla gorilla gorilla (Western lowland gorilla).